The sequence spans 189 residues: FUN14 domain-containing protein 2 (189 aa).

The Cytoplasmic portion of the chain corresponds to 1–80 (METSAPRAGS…GQESGPSAEK (80 aa)). Phosphoserine is present on residues S10 and S53. The helical transmembrane segment at 81 to 101 (YSVATQLFIGGVTGWCTGFIF) threads the bilayer. At 102–107 (QKVGKL) the chain is on the mitochondrial intermembrane side. The chain crosses the membrane as a helical span at residues 108–128 (AATAVGGGFFLLQLANHTGYI). Residues 129-164 (KVDWQRVEKDMKKAKEQLKIRKSNQIPTEVRSKAEE) are Cytoplasmic-facing. Position 151 is a phosphoserine (S151). A helical membrane pass occupies residues 165-185 (VVSFVKKNVLVTGGFFGGFLL). Residues 186–189 (GMAS) lie on the Mitochondrial intermembrane side of the membrane.

The protein belongs to the FUN14 family. Highly expressed in platelets (at protein level).

Its subcellular location is the mitochondrion outer membrane. The protein resides in the nucleus. Binds directly and specifically 1,2-Diacyl-sn-glycero-3-phospho-(1'-myo-inositol-3',4',5'-bisphosphate) (PIP3) leading to the recruitment of PIP3 to mitochondria and may play a role in the regulation of the platelet activation via AKT/GSK3B/cGMP signaling pathways. May act as transcription factor that regulates SREBP1 (isoform SREBP-1C) expression in order to modulate triglyceride (TG) homeostasis in hepatocytes. The polypeptide is FUN14 domain-containing protein 2 (Homo sapiens (Human)).